Reading from the N-terminus, the 156-residue chain is Small ribosomal subunit protein uS7 (156 aa).

Belongs to the universal ribosomal protein uS7 family. In terms of assembly, part of the 30S ribosomal subunit. Contacts proteins S9 and S11.

Functionally, one of the primary rRNA binding proteins, it binds directly to 16S rRNA where it nucleates assembly of the head domain of the 30S subunit. Is located at the subunit interface close to the decoding center, probably blocks exit of the E-site tRNA. The sequence is that of Small ribosomal subunit protein uS7 from Clostridioides difficile (strain 630) (Peptoclostridium difficile).